Consider the following 317-residue polypeptide: Pantothenate kinase (317 aa).

99 to 106 provides a ligand contact to ATP; the sequence is GSVSVGKS.

Belongs to the prokaryotic pantothenate kinase family.

The protein resides in the cytoplasm. The enzyme catalyses (R)-pantothenate + ATP = (R)-4'-phosphopantothenate + ADP + H(+). It functions in the pathway cofactor biosynthesis; coenzyme A biosynthesis; CoA from (R)-pantothenate: step 1/5. The chain is Pantothenate kinase from Histophilus somni (strain 2336) (Haemophilus somnus).